The chain runs to 423 residues: Large ribosomal subunit protein mL37 (423 aa).

The transit peptide at 1 to 29 (MALASGPARRVLARPWGLGLEGCGVPRRG) directs the protein to the mitochondrion.

It belongs to the mitochondrion-specific ribosomal protein mL37 family. In terms of assembly, component of the mitochondrial ribosome large subunit (39S) which comprises a 16S rRNA and about 50 distinct proteins.

The protein resides in the mitochondrion. The polypeptide is Large ribosomal subunit protein mL37 (MRPL37) (Bos taurus (Bovine)).